We begin with the raw amino-acid sequence, 425 residues long: Formyl-CoA:oxalate CoA-transferase (425 aa).

CoA is bound by residues 17-18 (QS), Arg-38, 72-75 (LDTK), 96-98 (NFG), Arg-104, and 136-139 (KVYE). Asp-168 acts as the Nucleophile in catalysis. 247–249 (GGQ) contributes to the substrate binding site.

This sequence belongs to the CoA-transferase III family. Frc subfamily. Homodimer.

It catalyses the reaction formyl-CoA + oxalate = oxalyl-CoA + formate. Its pathway is metabolic intermediate degradation; oxalate degradation; CO(2) and formate from oxalate: step 1/2. Its function is as follows. Involved in the catabolism of oxalate and in the adapatation to low pH via the induction of the oxalate-dependent acid tolerance response (ATR). Catalyzes the transfer of the CoA moiety from formyl-CoA to oxalate. The polypeptide is Formyl-CoA:oxalate CoA-transferase (Rhodopseudomonas palustris (strain BisA53)).